The sequence spans 414 residues: Succinylornithine transaminase (414 aa).

Lysine 260 is subject to N6-(pyridoxal phosphate)lysine.

This sequence belongs to the class-III pyridoxal-phosphate-dependent aminotransferase family. AstC subfamily. The cofactor is pyridoxal 5'-phosphate.

The catalysed reaction is N(2)-succinyl-L-ornithine + 2-oxoglutarate = N-succinyl-L-glutamate 5-semialdehyde + L-glutamate. The protein operates within amino-acid degradation; L-arginine degradation via AST pathway; L-glutamate and succinate from L-arginine: step 3/5. Its function is as follows. Catalyzes the transamination of N(2)-succinylornithine and alpha-ketoglutarate into N(2)-succinylglutamate semialdehyde and glutamate. Can also act as an acetylornithine aminotransferase. This chain is Succinylornithine transaminase, found in Yersinia pseudotuberculosis serotype I (strain IP32953).